Here is a 299-residue protein sequence, read N- to C-terminus: GTPase Era (299 aa).

The Era-type G domain maps to 4–171 (KSGFVAILGR…VDILSENLDE (168 aa)). Positions 12–19 (GRPNVGKS) are G1. 12–19 (GRPNVGKS) provides a ligand contact to GTP. The tract at residues 38 to 42 (QTTRN) is G2. A G3 region spans residues 59 to 62 (DTPG). GTP-binding positions include 59 to 63 (DTPGI) and 121 to 124 (NKID). The segment at 121-124 (NKID) is G4. The G5 stretch occupies residues 150 to 152 (ISA). Residues 202–280 (TREEIPHSVA…FLETWVKVKK (79 aa)) form the KH type-2 domain.

This sequence belongs to the TRAFAC class TrmE-Era-EngA-EngB-Septin-like GTPase superfamily. Era GTPase family. As to quaternary structure, monomer.

It localises to the cytoplasm. It is found in the cell membrane. An essential GTPase that binds both GDP and GTP, with rapid nucleotide exchange. Plays a role in 16S rRNA processing and 30S ribosomal subunit biogenesis and possibly also in cell cycle regulation and energy metabolism. The polypeptide is GTPase Era (Streptococcus pneumoniae (strain Hungary19A-6)).